Here is a 798-residue protein sequence, read N- to C-terminus: MIKKILTTCFGLFFGFCVFGVGLVAIAILVTYPKLPSLDSLQHYQPKMPLTIYSADGEVIGMYGEQRREFTKIGDFPEVLRNAVIAAEDKRFYRHWGVDVWGVARAAVGNVVSGSVQSGASTITQQVAKNFYLSSEKTFTRKFNEVLLAYKIEQSLSKDKILELYFNQIYLGQRAYGFASAAQIYFNKNVRDLTLAEAAMLAGLPKAPSAYNPIVNPERAKLRQKYILNNMLEEKMITVQQRDQALNEELHYERFVRKIDQSALYVAEMVRRELYEKYGEDAYTQGFKVYTTVRTDHQKAATEALRKALRNFDRGSSYRGAENYIDLSKSEDVEETVSQYLSGLYTVDKMVPAVVLDVTKKKNVVIQLPGGRRVALDRRALGFAARAVDNEKMGEDRIRRGAVIRVKNNGGRWAVVQEPLLQGALVSLDAKTGAVRALVGGYDFHSKTFNRAVQAMRQPGSTFKPFVYSAALSKGMTASTVVNDAPISLPGKGPNGSVWTPKNSDGRYSGYITLRQALTASKNMVSIRILMSIGVGYAQQYIRRFGFRPSELPASLSMALGTGETTPLKVAEAYSVFANGGYRVSSHVIDKIYDRDGRLRAQMQPLVAGQNAPQAIDPRNAYIMYKIMQDVVRVGTARGAAALGRTDIAGKTGTTNDNKDAWFVGFNPDVVTAVYIGFDKPKSMGRAGYGGTIAVPVWVDYMRFALKGKQGKGMKMPEGVVSSNGEYYMKERMVTDPGLMLDNSGIAPQPSRRAKEDDEAAVENEQQGRSDETRQDVQETPVLPSNTDSKQQQLDSLF.

Residues 2-9 (IKKILTTC) are Cytoplasmic-facing. Residues 10–30 (FGLFFGFCVFGVGLVAIAILV) traverse the membrane as a helical; Signal-anchor for type II membrane protein segment. Residues 31–798 (TYPKLPSLDS…SKQQQLDSLF (768 aa)) are Periplasmic-facing. The segment at 50-218 (LTIYSADGEV…SAYNPIVNPE (169 aa)) is transglycosylase. The active-site Proton donor; for transglycosylase activity is the E88. Residues 378 to 700 (RRALGFAARA…GTIAVPVWVD (323 aa)) form a transpeptidase region. S461 acts as the Acyl-ester intermediate; for transpeptidase activity in catalysis. A disordered region spans residues 739 to 798 (LMLDNSGIAPQPSRRAKEDDEAAVENEQQGRSDETRQDVQETPVLPSNTDSKQQQLDSLF). Residues 766-777 (QQGRSDETRQDV) show a composition bias toward basic and acidic residues. Polar residues predominate over residues 783–798 (LPSNTDSKQQQLDSLF).

It in the N-terminal section; belongs to the glycosyltransferase 51 family. In the C-terminal section; belongs to the transpeptidase family.

Its subcellular location is the cell inner membrane. The enzyme catalyses [GlcNAc-(1-&gt;4)-Mur2Ac(oyl-L-Ala-gamma-D-Glu-L-Lys-D-Ala-D-Ala)](n)-di-trans,octa-cis-undecaprenyl diphosphate + beta-D-GlcNAc-(1-&gt;4)-Mur2Ac(oyl-L-Ala-gamma-D-Glu-L-Lys-D-Ala-D-Ala)-di-trans,octa-cis-undecaprenyl diphosphate = [GlcNAc-(1-&gt;4)-Mur2Ac(oyl-L-Ala-gamma-D-Glu-L-Lys-D-Ala-D-Ala)](n+1)-di-trans,octa-cis-undecaprenyl diphosphate + di-trans,octa-cis-undecaprenyl diphosphate + H(+). It catalyses the reaction Preferential cleavage: (Ac)2-L-Lys-D-Ala-|-D-Ala. Also transpeptidation of peptidyl-alanyl moieties that are N-acyl substituents of D-alanine.. Its pathway is cell wall biogenesis; peptidoglycan biosynthesis. In terms of biological role, cell wall formation. Synthesis of cross-linked peptidoglycan from the lipid intermediates. The enzyme has a penicillin-insensitive transglycosylase N-terminal domain (formation of linear glycan strands) and a penicillin-sensitive transpeptidase C-terminal domain (cross-linking of the peptide subunits). Essential for cell wall synthesis. In Neisseria gonorrhoeae (strain ATCC 700825 / FA 1090), this protein is Penicillin-binding protein 1A (mrcA).